The following is a 511-amino-acid chain: 2-isopropylmalate synthase (511 aa).

The Pyruvate carboxyltransferase domain occupies I6 to S269. Residues D15, H203, H205, and N239 each coordinate Mn(2+). The tract at residues V394 to A511 is regulatory domain.

This sequence belongs to the alpha-IPM synthase/homocitrate synthase family. LeuA type 1 subfamily. Homodimer. It depends on Mn(2+) as a cofactor.

It is found in the cytoplasm. It catalyses the reaction 3-methyl-2-oxobutanoate + acetyl-CoA + H2O = (2S)-2-isopropylmalate + CoA + H(+). The protein operates within amino-acid biosynthesis; L-leucine biosynthesis; L-leucine from 3-methyl-2-oxobutanoate: step 1/4. Functionally, catalyzes the condensation of the acetyl group of acetyl-CoA with 3-methyl-2-oxobutanoate (2-ketoisovalerate) to form 3-carboxy-3-hydroxy-4-methylpentanoate (2-isopropylmalate). In Campylobacter jejuni subsp. doylei (strain ATCC BAA-1458 / RM4099 / 269.97), this protein is 2-isopropylmalate synthase.